The sequence spans 101 residues: Small ribosomal subunit protein uS14 (101 aa).

It belongs to the universal ribosomal protein uS14 family. Part of the 30S ribosomal subunit. Contacts proteins S3 and S10.

In terms of biological role, binds 16S rRNA, required for the assembly of 30S particles and may also be responsible for determining the conformation of the 16S rRNA at the A site. The protein is Small ribosomal subunit protein uS14 of Neisseria gonorrhoeae (strain ATCC 700825 / FA 1090).